A 417-amino-acid polypeptide reads, in one-letter code: Gamma-glutamyl phosphate reductase (417 aa).

The protein belongs to the gamma-glutamyl phosphate reductase family.

Its subcellular location is the cytoplasm. It carries out the reaction L-glutamate 5-semialdehyde + phosphate + NADP(+) = L-glutamyl 5-phosphate + NADPH + H(+). It participates in amino-acid biosynthesis; L-proline biosynthesis; L-glutamate 5-semialdehyde from L-glutamate: step 2/2. Functionally, catalyzes the NADPH-dependent reduction of L-glutamate 5-phosphate into L-glutamate 5-semialdehyde and phosphate. The product spontaneously undergoes cyclization to form 1-pyrroline-5-carboxylate. In Klebsiella pneumoniae (strain 342), this protein is Gamma-glutamyl phosphate reductase.